A 206-amino-acid polypeptide reads, in one-letter code: ATP phosphoribosyltransferase (206 aa).

Belongs to the ATP phosphoribosyltransferase family. Short subfamily. In terms of assembly, heteromultimer composed of HisG and HisZ subunits.

It localises to the cytoplasm. The catalysed reaction is 1-(5-phospho-beta-D-ribosyl)-ATP + diphosphate = 5-phospho-alpha-D-ribose 1-diphosphate + ATP. It functions in the pathway amino-acid biosynthesis; L-histidine biosynthesis; L-histidine from 5-phospho-alpha-D-ribose 1-diphosphate: step 1/9. In terms of biological role, catalyzes the condensation of ATP and 5-phosphoribose 1-diphosphate to form N'-(5'-phosphoribosyl)-ATP (PR-ATP). Has a crucial role in the pathway because the rate of histidine biosynthesis seems to be controlled primarily by regulation of HisG enzymatic activity. In Wolinella succinogenes (strain ATCC 29543 / DSM 1740 / CCUG 13145 / JCM 31913 / LMG 7466 / NCTC 11488 / FDC 602W) (Vibrio succinogenes), this protein is ATP phosphoribosyltransferase.